The sequence spans 86 residues: Acyl carrier protein (86 aa).

Positions 10–85 (DKIEQKVIEM…DVIQYIKERQ (76 aa)) constitute a Carrier domain. An O-(pantetheine 4'-phosphoryl)serine modification is found at S45.

Belongs to the acyl carrier protein (ACP) family. Post-translationally, 4'-phosphopantetheine is transferred from CoA to a specific serine of apo-ACP by AcpS. This modification is essential for activity because fatty acids are bound in thioester linkage to the sulfhydryl of the prosthetic group.

The protein localises to the cytoplasm. The protein operates within lipid metabolism; fatty acid biosynthesis. In terms of biological role, carrier of the growing fatty acid chain in fatty acid biosynthesis. This Rickettsia canadensis (strain McKiel) protein is Acyl carrier protein.